Reading from the N-terminus, the 188-residue chain is CMT1A duplicated region transcript 15 protein (188 aa).

As to expression, expressed in fetal heart, kidney, liver, lung and spleen.

The chain is CMT1A duplicated region transcript 15 protein (CDRT15) from Homo sapiens (Human).